We begin with the raw amino-acid sequence, 235 residues long: Carboxy-S-adenosyl-L-methionine synthase (235 aa).

Residues Tyr35, 60-62, 83-84, Asn124, and Arg191 contribute to the S-adenosyl-L-methionine site; these read GCS and DN.

Belongs to the class I-like SAM-binding methyltransferase superfamily. Cx-SAM synthase family. In terms of assembly, homodimer.

It carries out the reaction prephenate + S-adenosyl-L-methionine = carboxy-S-adenosyl-L-methionine + 3-phenylpyruvate + H2O. Functionally, catalyzes the conversion of S-adenosyl-L-methionine (SAM) to carboxy-S-adenosyl-L-methionine (Cx-SAM). The protein is Carboxy-S-adenosyl-L-methionine synthase of Campylobacter jejuni subsp. jejuni serotype O:2 (strain ATCC 700819 / NCTC 11168).